The chain runs to 439 residues: Methylenetetrahydrofolate--tRNA-(uracil-5-)-methyltransferase TrmFO (439 aa).

Residue 9–14 (GAGLAG) participates in FAD binding.

This sequence belongs to the MnmG family. TrmFO subfamily. It depends on FAD as a cofactor.

Its subcellular location is the cytoplasm. The catalysed reaction is uridine(54) in tRNA + (6R)-5,10-methylene-5,6,7,8-tetrahydrofolate + NADH + H(+) = 5-methyluridine(54) in tRNA + (6S)-5,6,7,8-tetrahydrofolate + NAD(+). It carries out the reaction uridine(54) in tRNA + (6R)-5,10-methylene-5,6,7,8-tetrahydrofolate + NADPH + H(+) = 5-methyluridine(54) in tRNA + (6S)-5,6,7,8-tetrahydrofolate + NADP(+). Catalyzes the folate-dependent formation of 5-methyl-uridine at position 54 (M-5-U54) in all tRNAs. This Lactobacillus delbrueckii subsp. bulgaricus (strain ATCC BAA-365 / Lb-18) protein is Methylenetetrahydrofolate--tRNA-(uracil-5-)-methyltransferase TrmFO.